The chain runs to 135 residues: MRKPTESAGPTQRQQRVAELVRHAIAEVLSRGDLQDPVLSRHVITVPEVRMSPDLKLATAYVMPLGGEDEQPVIEALERNRKVLRQEVARRVNLKFAPDLRFRRDETFDEAARIDRLLRSDKVQRDLGPDRDSGE.

Belongs to the RbfA family. In terms of assembly, monomer. Binds 30S ribosomal subunits, but not 50S ribosomal subunits or 70S ribosomes.

The protein resides in the cytoplasm. Its function is as follows. One of several proteins that assist in the late maturation steps of the functional core of the 30S ribosomal subunit. Associates with free 30S ribosomal subunits (but not with 30S subunits that are part of 70S ribosomes or polysomes). Required for efficient processing of 16S rRNA. May interact with the 5'-terminal helix region of 16S rRNA. The protein is Ribosome-binding factor A of Methylobacterium nodulans (strain LMG 21967 / CNCM I-2342 / ORS 2060).